An 84-amino-acid polypeptide reads, in one-letter code: Sulfur carrier protein TusA (84 aa).

C19 functions as the Cysteine persulfide intermediate in the catalytic mechanism.

It belongs to the sulfur carrier protein TusA family. Interacts with IscS.

It localises to the cytoplasm. It participates in tRNA modification. Sulfur carrier protein involved in sulfur trafficking in the cell. Part of a sulfur-relay system required for 2-thiolation during synthesis of 2-thiouridine of the modified wobble base 5-methylaminomethyl-2-thiouridine (mnm(5)s(2)U) in tRNA. Interacts with IscS and stimulates its cysteine desulfurase activity. Accepts an activated sulfur from IscS, which is then transferred to TusD, and thus determines the direction of sulfur flow from IscS to 2-thiouridine formation. Also appears to be involved in sulfur transfer for the biosynthesis of molybdopterin. This Yersinia pseudotuberculosis serotype O:1b (strain IP 31758) protein is Sulfur carrier protein TusA.